The following is a 412-amino-acid chain: MDDERFQQAEMNIGMVGHVDHGKTTLTKALSGVWTDTHSEETRRGISIRLGYADTVLTRCPECDTYSVEEKCPECGAETEWLRRVSFVDSPGHETLMATMLSGAAIMDAAILVIAANEPCPQPQTREHLMALEIIGTEDVIVVQNKIDLVTPEEAREHYEQIVQFLEEETHLDPDKTPIIPVSAQHKANLDVLVEAMYEHFEPPEYDLDAPFRMYIARSFDVNKPGTRPSDLKGGVIGGAIVQGEVEIGDEIEIRPGIRVERYGRTEWEPVYTEVVSLHANVTPVERARPGGLVGIGTKLDPTMTKADRLSGQVAGEPDTLPPVRHELLLEVELLERVVGTEEERKVEPIRTNEVLMLTVGTATTVGVVTSARDDEIEIKLKQPVCAEEGDRVAISRRIQRWRLIGHGVIKG.

The region spanning 8-205 is the tr-type G domain; it reads QAEMNIGMVG…AMYEHFEPPE (198 aa). The interval 17–24 is G1; the sequence is GHVDHGKT. Residues D20, T24, G45, and S47 each coordinate Mg(2+). GTP is bound at residue 20–25; it reads DHGKTT. The segment at 45–49 is G2; that stretch reads GISIR. The Zn(2+) site is built by C60, C63, C72, and C75. A G3 region spans residues 89 to 92; the sequence is DSPG. GTP contacts are provided by residues 145–148 and 183–185; these read NKID and SAQ. Positions 145 to 148 are G4; that stretch reads NKID. The G5 stretch occupies residues 183–185; that stretch reads SAQ.

Belongs to the TRAFAC class translation factor GTPase superfamily. Classic translation factor GTPase family. EIF2G subfamily. Heterotrimer composed of an alpha, a beta and a gamma chain. Requires Mg(2+) as cofactor.

It carries out the reaction GTP + H2O = GDP + phosphate + H(+). Its function is as follows. eIF-2 functions in the early steps of protein synthesis by forming a ternary complex with GTP and initiator tRNA. This chain is Translation initiation factor 2 subunit gamma, found in Methanopyrus kandleri (strain AV19 / DSM 6324 / JCM 9639 / NBRC 100938).